The primary structure comprises 269 residues: 5'-nucleotidase SurE (269 aa).

A divalent metal cation is bound by residues Asp11, Asp12, Ser43, and Asn101.

The protein belongs to the SurE nucleotidase family. Requires a divalent metal cation as cofactor.

Its subcellular location is the cytoplasm. It catalyses the reaction a ribonucleoside 5'-phosphate + H2O = a ribonucleoside + phosphate. In terms of biological role, nucleotidase that shows phosphatase activity on nucleoside 5'-monophosphates. In Prochlorococcus marinus (strain MIT 9303), this protein is 5'-nucleotidase SurE.